Reading from the N-terminus, the 331-residue chain is Phosphoenolpyruvate transferase (331 aa).

Residue Asp-63 coordinates 7,8-didemethyl-8-hydroxy-5-deazariboflavin.

The protein belongs to the CofD family. Homodimer. Mg(2+) is required as a cofactor.

It catalyses the reaction enolpyruvoyl-2-diphospho-5'-guanosine + 7,8-didemethyl-8-hydroxy-5-deazariboflavin = dehydro coenzyme F420-0 + GMP + H(+). Its pathway is cofactor biosynthesis; coenzyme F420 biosynthesis. Catalyzes the transfer of the phosphoenolpyruvate moiety from enoylpyruvoyl-2-diphospho-5'-guanosine (EPPG) to 7,8-didemethyl-8-hydroxy-5-deazariboflavin (FO) with the formation of dehydro coenzyme F420-0 and GMP. In Mycobacterium sp. (strain JLS), this protein is Phosphoenolpyruvate transferase.